The following is a 354-amino-acid chain: UDP-glucose 4-epimerase 1 (354 aa).

Position 8 to 39 (8 to 39) interacts with NAD(+); that stretch reads TILVTGGAGYIGSHTVLQLLQLGFRVVVLDNL. Substrate is bound at residue serine 133. Tyrosine 157 acts as the Proton acceptor in catalysis.

This sequence belongs to the NAD(P)-dependent epimerase/dehydratase family. It depends on NAD(+) as a cofactor.

The enzyme catalyses UDP-alpha-D-glucose = UDP-alpha-D-galactose. It participates in carbohydrate metabolism; galactose metabolism. Catalyzes the interconversion between UDP-glucose and UDP-galactose. This Oryza sativa subsp. japonica (Rice) protein is UDP-glucose 4-epimerase 1 (UGE-1).